The following is a 344-amino-acid chain: 2,3,4,5-tetrahydropyridine-2,6-dicarboxylate N-succinyltransferase (344 aa).

Glu-205 contributes to the Mg(2+) binding site. Glu-221 acts as the Acyl-anhydride intermediate in catalysis. Succinyl-CoA contacts are provided by residues Arg-223, Gly-238, Ser-241, Ala-264, 279 to 280 (EA), Gly-287, Lys-304, and 317 to 320 (RRNS).

Belongs to the type 2 tetrahydrodipicolinate N-succinyltransferase family. In terms of assembly, homotrimer.

It localises to the cytoplasm. It catalyses the reaction (S)-2,3,4,5-tetrahydrodipicolinate + succinyl-CoA + H2O = (S)-2-succinylamino-6-oxoheptanedioate + CoA. It participates in amino-acid biosynthesis; L-lysine biosynthesis via DAP pathway; LL-2,6-diaminopimelate from (S)-tetrahydrodipicolinate (succinylase route): step 1/3. Functionally, catalyzes the conversion of the cyclic tetrahydrodipicolinate (THDP) into the acyclic N-succinyl-L-2-amino-6-oxopimelate using succinyl-CoA. The protein is 2,3,4,5-tetrahydropyridine-2,6-dicarboxylate N-succinyltransferase of Pseudomonas paraeruginosa (strain DSM 24068 / PA7) (Pseudomonas aeruginosa (strain PA7)).